A 285-amino-acid polypeptide reads, in one-letter code: Single myb histone 3 (285 aa).

A disordered region spans residues 1 to 35; sequence MGAPKQKWTSEEEDALRRGVRKHGAGKWRTIQKDP. The HTH myb-type domain maps to 1–60; the sequence is MGAPKQKWTSEEEDALRRGVRKHGAGKWRTIQKDPQFSPILSSRSNIDLKDKWRNLSFSA. The H-T-H motif DNA-binding region spans 28–56; the sequence is WRTIQKDPQFSPILSSRSNIDLKDKWRNL. An H15 domain is found at 113-181; it reads TPPKYGAMIM…KVDNFYRLPD (69 aa). The stretch at 226–255 forms a coiled coil; the sequence is VKVTDAEAKAHDAHDQMMEAERMLKMAEDT.

It belongs to the histone H1/H5 family. SMH subfamily. In terms of assembly, forms a homodimer and heterodimers.

It localises to the nucleus. The protein localises to the chromosome. The protein resides in the nucleolus. Its subcellular location is the telomere. Functionally, binds preferentially double-stranded telomeric repeats, but may also bind to the single telomeric strand. The chain is Single myb histone 3 (SMH3) from Zea mays (Maize).